Reading from the N-terminus, the 116-residue chain is Tyrosine-protein phosphatase 14 (116 aa).

Residues 1-116 (WRMITQEKAQ…SLKNPGPVIV (116 aa)) form the Tyrosine-protein phosphatase domain. Asp-84 provides a ligand contact to substrate.

It belongs to the protein-tyrosine phosphatase family.

The catalysed reaction is O-phospho-L-tyrosyl-[protein] + H2O = L-tyrosyl-[protein] + phosphate. This is Tyrosine-protein phosphatase 14 (STY-14) from Styela plicata (Wrinkled sea squirt).